Here is a 353-residue protein sequence, read N- to C-terminus: tRNA-specific 2-thiouridylase MnmA 2 (353 aa).

Residues 9–16 (AMSGGVDS) and Met35 contribute to the ATP site. Cys98 functions as the Nucleophile in the catalytic mechanism. A disulfide bond links Cys98 and Cys194. Gly122 lines the ATP pocket. The tract at residues 144 to 146 (KDQ) is interaction with tRNA. Cys194 acts as the Cysteine persulfide intermediate in catalysis. An interaction with tRNA region spans residues 300–301 (RY).

The protein belongs to the MnmA/TRMU family.

The protein localises to the cytoplasm. It carries out the reaction S-sulfanyl-L-cysteinyl-[protein] + uridine(34) in tRNA + AH2 + ATP = 2-thiouridine(34) in tRNA + L-cysteinyl-[protein] + A + AMP + diphosphate + H(+). Functionally, catalyzes the 2-thiolation of uridine at the wobble position (U34) of tRNA, leading to the formation of s(2)U34. This Clostridium botulinum (strain ATCC 19397 / Type A) protein is tRNA-specific 2-thiouridylase MnmA 2.